The chain runs to 1125 residues: Speract receptor (1125 aa).

A signal peptide spans 1–21 (MAHARHLFLFMVAFTITMVIA). The Extracellular portion of the chain corresponds to 22–510 (RLDFNPTIIN…GELCTNWALY (489 aa)). N-linked (GlcNAc...) asparagine glycans are attached at residues Asn-185 and Asn-409. A helical transmembrane segment spans residues 511 to 531 (LGASIPTFLIIFGGLIGFFIY). At 532-1125 (RKRAYEAALD…AANRVIPDDV (594 aa)) the chain is on the cytoplasmic side. Positions 571–839 (MSAISVISNA…PNIMAVRTML (269 aa)) constitute a Protein kinase domain. The 131-residue stretch at 914–1044 (SIFFSDIVGF…DTVNTASRME (131 aa)) folds into the Guanylate cyclase domain.

It belongs to the adenylyl cyclase class-4/guanylyl cyclase family.

The protein localises to the membrane. It carries out the reaction GTP = 3',5'-cyclic GMP + diphosphate. Functionally, implicated as a cell-surface receptor on spermatozoa for 'speract' a chemotactic peptide, and on various other cells as a receptor for atrial natriuretic peptide. In Strongylocentrotus purpuratus (Purple sea urchin), this protein is Speract receptor.